The chain runs to 226 residues: Uracil-DNA glycosylase (226 aa).

Catalysis depends on aspartate 65, which acts as the Proton acceptor.

Belongs to the uracil-DNA glycosylase (UDG) superfamily. UNG family.

The protein localises to the cytoplasm. The catalysed reaction is Hydrolyzes single-stranded DNA or mismatched double-stranded DNA and polynucleotides, releasing free uracil.. In terms of biological role, excises uracil residues from the DNA which can arise as a result of misincorporation of dUMP residues by DNA polymerase or due to deamination of cytosine. This Bacillus pumilus (strain SAFR-032) protein is Uracil-DNA glycosylase.